The following is a 212-amino-acid chain: Thymidylate kinase (212 aa).

10–17 (GLEGAGKS) provides a ligand contact to ATP.

It belongs to the thymidylate kinase family.

The catalysed reaction is dTMP + ATP = dTDP + ADP. In terms of biological role, phosphorylation of dTMP to form dTDP in both de novo and salvage pathways of dTTP synthesis. The chain is Thymidylate kinase from Vibrio cholerae serotype O1 (strain ATCC 39541 / Classical Ogawa 395 / O395).